A 326-amino-acid polypeptide reads, in one-letter code: Adenosine receptor A1 (326 aa).

Residues 1–10 (MPPAISAFQA) are Extracellular-facing. The helical transmembrane segment at 11 to 33 (AYIGIEVLIALVSVPGNVLVIWA) threads the bilayer. Over 34 to 46 (VKVNQALRDATFC) the chain is Cytoplasmic. A helical transmembrane segment spans residues 47 to 69 (FIVSLAVADVAVGALVIPLAILI). At 70 to 80 (NIGPRTYFHTC) the chain is on the extracellular side. A disulfide bridge connects residues Cys-80 and Cys-169. The chain crosses the membrane as a helical span at residues 81–102 (LMVACPVLILTQSSILALLAIA). Residues 103-123 (VDRYLRVKIPLRYKTVVTPRR) are Cytoplasmic-facing. Residues 124-146 (AAVAIAGCWILSFVVGLTPLFGW) traverse the membrane as a helical segment. Residues 147-176 (NRLGEAQRAWAANGSGGEPVIKCEFEKVIS) lie on the Extracellular side of the membrane. Asn-159 is a glycosylation site (N-linked (GlcNAc...) asparagine). The chain crosses the membrane as a helical span at residues 177 to 201 (MEYMVYFNFFVWVLPPLLLMVLIYL). Over 202–235 (EVFYLIRRQLGKKVSASSGDPQKYYGKELKIAKS) the chain is Cytoplasmic. The helical transmembrane segment at 236-259 (LALILFLFALSWLPLHILNCITLF) threads the bilayer. The Extracellular portion of the chain corresponds to 260 to 267 (CPSCRKPS). Residues 268–292 (ILMYIAIFLTHGNSAMNPIVYAFRI) traverse the membrane as a helical segment. The Cytoplasmic portion of the chain corresponds to 293-326 (QKFRVTFLKIWNDHFRCQPTPPVDEDPPEEAPHD). A lipid anchor (S-palmitoyl cysteine) is attached at Cys-309.

It belongs to the G-protein coupled receptor 1 family.

Its subcellular location is the cell membrane. In terms of biological role, receptor for adenosine. The activity of this receptor is mediated by G proteins which inhibit adenylyl cyclase. The sequence is that of Adenosine receptor A1 (ADORA1) from Canis lupus familiaris (Dog).